The following is a 631-amino-acid chain: Phosphomethylpyrimidine synthase (631 aa).

Residues N239, M268, Y297, H333, 353–355 (SRG), 394–397 (DGLR), and E433 each bind substrate. H437 is a Zn(2+) binding site. Y460 is a substrate binding site. Residue H501 coordinates Zn(2+). [4Fe-4S] cluster is bound by residues C581, C584, and C589.

The protein belongs to the ThiC family. Homodimer. Requires [4Fe-4S] cluster as cofactor.

The enzyme catalyses 5-amino-1-(5-phospho-beta-D-ribosyl)imidazole + S-adenosyl-L-methionine = 4-amino-2-methyl-5-(phosphooxymethyl)pyrimidine + CO + 5'-deoxyadenosine + formate + L-methionine + 3 H(+). Its pathway is cofactor biosynthesis; thiamine diphosphate biosynthesis. Functionally, catalyzes the synthesis of the hydroxymethylpyrimidine phosphate (HMP-P) moiety of thiamine from aminoimidazole ribotide (AIR) in a radical S-adenosyl-L-methionine (SAM)-dependent reaction. This chain is Phosphomethylpyrimidine synthase, found in Salmonella dublin (strain CT_02021853).